Consider the following 118-residue polypeptide: UPF0295 protein BT9727_0449 (118 aa).

The next 2 helical transmembrane spans lie at 12 to 32 and 43 to 63; these read IRTF…LGVF and FMMV…WIGM.

The protein belongs to the UPF0295 family.

The protein resides in the cell membrane. In Bacillus thuringiensis subsp. konkukian (strain 97-27), this protein is UPF0295 protein BT9727_0449.